Reading from the N-terminus, the 1376-residue chain is Spike glycoprotein (1376 aa).

Residues 1–13 form the signal peptide; it reads MLFVFILLLPSCL. At 14–1317 the chain is on the extracellular side; sequence GYIGDFRCIQ…GTYEMYVKWP (1304 aa). Residues 15-296 enclose the BetaCoV S1-NTD domain; sequence YIGDFRCIQT…SYISEIKCKT (282 aa). Residues 15–330 are receptor binding site; sequence YIGDFRCIQT…RRVPNLPDCK (316 aa). Intrachain disulfides connect Cys-21–Cys-158, Cys-153–Cys-187, Cys-165–Cys-246, Cys-284–Cys-294, and Cys-329–Cys-354. N-linked (GlcNAc...) asparagine; by host glycans are attached at residues Asn-31, Asn-60, and Asn-134. N-linked (GlcNAc...) asparagine; by host glycosylation is present at Asn-192. The BetaCoV S1-CTD domain occupies 327–618; it reads PDCKIEEWLT…GINSGTTCST (292 aa). Asn-357 is a glycosylation site (N-linked (GlcNAc...) asparagine; by host). Intrachain disulfides connect Cys-372–Cys-425 and Cys-384–Cys-616. The important for the neurovirulence stretch occupies residues 429–599; that stretch reads YSLPKNNVTI…HDTCLVNDRC (171 aa). Residues Asn-435, Asn-582, Asn-677, Asn-709, Asn-717, Asn-740, Asn-789, and Asn-806 are each glycosylated (N-linked (GlcNAc...) asparagine; by host). Fusion peptide regions lie at residues 922 to 943 and 941 to 961; these read SAIE…VEAY and EAYN…VQSF. Asn-945 carries N-linked (GlcNAc...) asparagine; by host glycosylation. Cys-946 and Cys-957 are disulfide-bonded. The heptad repeat 1 stretch occupies residues 1022 to 1072; that stretch reads QKMIASAFNNALGAIQEGFDATNSALGKIQSVVNANAEALNNLLNQLSNRF. The stretch at 1051-1095 forms a coiled coil; it reads QSVVNANAEALNNLLNQLSNRFGAISASLQEILTRLDAVEAKAQI. Residues Asn-1232, Asn-1242, Asn-1261, Asn-1277, and Asn-1298 are each glycosylated (N-linked (GlcNAc...) asparagine; by host). The tract at residues 1266–1306 is heptad repeat 2; sequence APDLSLDFEKLNVTFLDLTYEMNRIQDAIKKLNESYINLKE. Positions 1279–1307 form a coiled coil; sequence TFLDLTYEMNRIQDAIKKLNESYINLKEV. Residues 1318-1338 traverse the membrane as a helical segment; sequence WYVWLLIGLAGVAVCVLLFFI. Residues 1339–1376 lie on the Cytoplasmic side of the membrane; that stretch reads CCCTGCGSCCFRKCGSCCDEYGGHQDSIVIHNISAHED. A KxHxx motif is present at residues 1372–1376; it reads SAHED.

This sequence belongs to the betacoronaviruses spike protein family. Homotrimer; each monomer consists of a S1 and a S2 subunit. The resulting peplomers protrude from the virus surface as spikes. Specific enzymatic cleavages in vivo yield mature proteins. The precursor is processed into S1 and S2 by host cell furin or another cellular protease to yield the mature S1 and S2 proteins. Additionally, a second cleavage leads to the release of a fusion peptide after viral attachment to host cell receptor. Post-translationally, the cytoplasmic Cys-rich domain is palmitoylated. Spike glycoprotein is digested within host endosomes.

Its subcellular location is the virion membrane. The protein resides in the host endoplasmic reticulum-Golgi intermediate compartment membrane. It is found in the host cell membrane. In terms of biological role, attaches the virion to the cell membrane by interacting with host receptor, initiating the infection. Its function is as follows. Mediates fusion of the virion and cellular membranes by acting as a class I viral fusion protein. Under the current model, the protein has at least three conformational states: pre-fusion native state, pre-hairpin intermediate state, and post-fusion hairpin state. During viral and target cell membrane fusion, the coiled coil regions (heptad repeats) assume a trimer-of-hairpins structure, positioning the fusion peptide in close proximity to the C-terminal region of the ectodomain. The formation of this structure appears to drive apposition and subsequent fusion of viral and target cell membranes. Functionally, acts as a viral fusion peptide which is unmasked following S2 cleavage occurring upon virus endocytosis. The chain is Spike glycoprotein from Murine coronavirus (strain 4) (MHV-4).